Consider the following 448-residue polypeptide: DNA repair protein RadA (448 aa).

Residues 10–27 (CQHCGFTSPKWLGKCVQC) form a C4-type zinc finger. 96 to 103 (GSPGVGKS) is an ATP binding site. A RadA KNRFG motif motif is present at residues 253–257 (KNRFG). The segment at 351-448 (DVFINVSGGI…NAVGKIVEWM (98 aa)) is lon-protease-like.

Belongs to the RecA family. RadA subfamily.

In terms of biological role, DNA-dependent ATPase involved in processing of recombination intermediates, plays a role in repairing DNA breaks. Stimulates the branch migration of RecA-mediated strand transfer reactions, allowing the 3' invading strand to extend heteroduplex DNA faster. Binds ssDNA in the presence of ADP but not other nucleotides, has ATPase activity that is stimulated by ssDNA and various branched DNA structures, but inhibited by SSB. Does not have RecA's homology-searching function. The polypeptide is DNA repair protein RadA (Helicobacter pylori (strain ATCC 700392 / 26695) (Campylobacter pylori)).